Consider the following 582-residue polypeptide: Aspartate--tRNA ligase (582 aa).

An aspartate region spans residues 198-201 (QIFK). Arg-220 provides a ligand contact to L-aspartate. ATP contacts are provided by residues 220–222 (RDE) and Gln-229. Residue His-445 coordinates L-aspartate. Glu-479 is a binding site for ATP. Arg-486 provides a ligand contact to L-aspartate. 531–534 (GFDR) contacts ATP.

It belongs to the class-II aminoacyl-tRNA synthetase family. Type 1 subfamily. In terms of assembly, homodimer.

The protein resides in the cytoplasm. It carries out the reaction tRNA(Asp) + L-aspartate + ATP = L-aspartyl-tRNA(Asp) + AMP + diphosphate. Its function is as follows. Catalyzes the attachment of L-aspartate to tRNA(Asp) in a two-step reaction: L-aspartate is first activated by ATP to form Asp-AMP and then transferred to the acceptor end of tRNA(Asp). In Amoebophilus asiaticus (strain 5a2), this protein is Aspartate--tRNA ligase.